A 242-amino-acid chain; its full sequence is Agamous-like MADS-box protein AGL8 (242 aa).

Residues 3–57 form the MADS-box domain; the sequence is RGRVQLKRIENKINRQVTFSKRRSGLLKKAHEISVLCDAEVALIVFSSKGKLFEY. One can recognise a K-box domain in the interval 88 to 178; sequence SENWVLEHAK…LKKIKEREKK (91 aa). Positions 89 to 178 form a coiled coil; the sequence is ENWVLEHAKL…LKKIKEREKK (90 aa).

In terms of assembly, homodimer capable of binding to CArG-box sequences. As to expression, vascular tissue of cauline leaves, floral shoot apex and valves of carpels and fruits.

Its subcellular location is the nucleus. In terms of biological role, probable transcription factor that promotes early floral meristem identity in synergy with APETALA1 and CAULIFLOWER. Is required subsequently for the transition of an inflorescence meristem into a floral meristem. Seems to be partially redundant to the function of APETALA1 and CAULIFLOWER in the up-regulation of LEAFY. Is also required for normal pattern of cell division, expansion and differentiation during morphogenesis of the silique. Probably not required for fruit elongation but instead is required to prevent ectopic activity of IND. Represses SAUR10 expression in stems and inflorescence branches. This chain is Agamous-like MADS-box protein AGL8 (AGL8), found in Arabidopsis thaliana (Mouse-ear cress).